Reading from the N-terminus, the 38-residue chain is Beta-galactosidase (38 aa).

Belongs to the glycosyl hydrolase 35 family. As to quaternary structure, heterodimer of a large and a small subunit. Post-translationally, the small subunit is N-glycosylated.

It carries out the reaction Hydrolysis of terminal non-reducing beta-D-galactose residues in beta-D-galactosides.. Involved in cell wall degradation. Degrades polysaccharides containing beta-(1--&gt;4)-linked galactans, acting as an exo-(1--&gt;4)-beta-D-galactanase. This chain is Beta-galactosidase, found in Hordeum vulgare (Barley).